A 200-amino-acid polypeptide reads, in one-letter code: NAD(P)H dehydrogenase (quinone) (200 aa).

The region spanning 4–190 (VLVLYYSTYG…DGARFQGRLV (187 aa)) is the Flavodoxin-like domain. FMN contacts are provided by residues 10–15 (STYGHL) and 78–80 (TRF). An NAD(+)-binding site is contributed by Tyr-12. A substrate-binding site is contributed by Trp-98. FMN contacts are provided by residues 113 to 119 (STATQHG) and His-134.

The protein belongs to the WrbA family. Requires FMN as cofactor.

It catalyses the reaction a quinone + NADH + H(+) = a quinol + NAD(+). It carries out the reaction a quinone + NADPH + H(+) = a quinol + NADP(+). This is NAD(P)H dehydrogenase (quinone) from Acidovorax ebreus (strain TPSY) (Diaphorobacter sp. (strain TPSY)).